We begin with the raw amino-acid sequence, 1319 residues long: ERAD-associated E3 ubiquitin-protein ligase DOA10 (1319 aa).

The residue at position 1 (M1) is an N-acetylmethionine. At 1–131 the chain is on the cytoplasmic side; sequence MDVDSDVNVS…LTFFEKARLA (131 aa). An RING-CH-type zinc finger spans residues 31–100; the sequence is DDAPSGATCR…DICHYPIQFK (70 aa). Positions 39, 42, 56, 58, 66, 69, 90, and 93 each coordinate Zn(2+). Residues 132–152 traverse the membrane as a helical segment; that stretch reads LTIGLAAVLYIIGVPLVWNMF. Over 153–203 the chain is Lumenal; it reads GKLYTMMLDGSSPYPGDFLKSLIYGYDQSATPELTTRAIFYQLLQNHSFTS. A helical membrane pass occupies residues 204–224; it reads LQFIMIVILHIALYFQYDMIV. The Cytoplasmic segment spans residues 225-468; sequence REDVFSKMVF…GPLVINLKLK (244 aa). Positions 291–306 are enriched in low complexity; the sequence is ADNNNNVINPRNDNVP. 2 disordered regions span residues 291 to 315 and 329 to 381; these read ADNN…DHRN and EATE…EADY. The chain crosses the membrane as a helical span at residues 469–489; it reads LLNVIAYFIIAVVFTAIYLAI. Topologically, residues 490–491 are lumenal; it reads SY. A helical membrane pass occupies residues 492–512; the sequence is LFPTFIGFGLLKIYFGIFKVI. Residues 513–626 lie on the Cytoplasmic side of the membrane; that stretch reads LRGLCHLYYL…LFALKCTFKV (114 aa). The chain crosses the membrane as a helical span at residues 627 to 647; it reads FTLFFIELAGFPILAGVMLDF. The Lumenal portion of the chain corresponds to 648–660; sequence SLFCPILASNSRM. The chain crosses the membrane as a helical span at residues 661 to 681; that stretch reads LWVPSICAIWPPFSLFVYWTI. Residues 682-739 are Cytoplasmic-facing; it reads GTLYMYWFAKYIGMIRKNIIRPGVLFFIRSPEDPNIKILHDSLIHPMSIQLSRLCLSM. A helical transmembrane segment spans residues 740 to 760; the sequence is FIYAIFIVLGFGFHTRIFFPF. Over 761-777 the chain is Lumenal; sequence MLKSNLLSVPEAYKPTS. Residues 778–797 traverse the membrane as a helical segment; it reads IISWKFNTILLTLYFTKRIL. Topologically, residues 798–965 are cytoplasmic; that stretch reads ESSSYVKPLL…YVPPDFRLRY (168 aa). Residues 966-986 traverse the membrane as a helical segment; the sequence is MTLLGLVWLFASILMLGVTFI. At 987–1019 the chain is on the lumenal side; sequence SQALINFVCSFGFLPVVKLLLGERNKVYVAWKE. The helical transmembrane segment at 1020 to 1040 threads the bilayer; that stretch reads LSDISYSYLNIYYVCVGSVCL. At 1041–1113 the chain is on the cytoplasmic side; it reads SKIAKDILHF…IFDSMLVKYN (73 aa). Residues 1114 to 1134 traverse the membrane as a helical segment; sequence LMVFIAIMIAVIRTMVSWVVL. The Lumenal segment spans residues 1135–1168; it reads TDGILACYNYLTIRVFGNSSYTIGNSKWFKYDES. Residues 1169-1189 form a helical membrane-spanning segment; the sequence is LLFVVWIISSMVNFGTGYKSL. Topologically, residues 1190 to 1213 are cytoplasmic; sequence KLFFRNRNTSKLNFLKTMALELFK. A helical membrane pass occupies residues 1214–1234; the sequence is QGFLHMVIYVLPIIILSLVFL. The Lumenal portion of the chain corresponds to 1235–1270; sequence RDVSTKQIIDISHGSRSFTLSLNESFPTWTRMQDIY. A helical membrane pass occupies residues 1271-1291; it reads FGLLIALESFTFFFQATVLFI. Residues 1292–1319 are Cytoplasmic-facing; it reads QWFKSTVQNVKDEVYTKGRALENLPDES.

The protein belongs to the DOA10/MARCH6 family. In terms of assembly, component of the DOA10 ubiquitin ligase complex which contains E3 ligase SSM4/DOA10 and CDC48-binding protein UBX2/SEL1. The DOA10 complex interacts with the heterotrimeric CDC48-NPL4-UFD1 ATPase complex which is recruited by UBX2/SEL1 via its interaction with CDC48. Interacts with its associated ubiquitin conjugating enzymes UBC6 and UBC7 with its membrane anchor CUE1. Interacts with PEX29.

The protein resides in the endoplasmic reticulum membrane. It is found in the nucleus inner membrane. It carries out the reaction S-ubiquitinyl-[E2 ubiquitin-conjugating enzyme]-L-cysteine + [acceptor protein]-L-lysine = [E2 ubiquitin-conjugating enzyme]-L-cysteine + N(6)-ubiquitinyl-[acceptor protein]-L-lysine.. It functions in the pathway protein modification; protein ubiquitination. Functionally, E3 ubiquitin-protein ligase which accepts ubiquitin specifically from endoplasmic reticulum-associated UBC6 and UBC7 E2 ligases, and transfers it to substrates promoting their degradation. Mediates the degradation of a broad range of substrates, including endoplasmic reticulum membrane proteins (ERQC), soluble nuclear proteins and soluble cytoplasmic proteins (CytoQC). Component of the DOA10 ubiquitin ligase complex, which is part of the ERAD-C pathway responsible for the rapid degradation of membrane proteins with misfolded cytoplasmic domains. ERAD-C substrates are ubiquitinated through DOA10 in conjunction with the E2 ubiquitin-conjugating enzymes UBC6 and UBC7-CUE1. Ubiquitinated substrates are then removed to the cytosol via the action of the UFD1-NPL4-CDC48/p97 (UNC) AAA ATPase complex and targeted to the proteasome. Also recognizes the N-terminally acetylated residue of proteins as degradation signal (degron). N-terminally acetylated target proteins include MATALPHA2, TBF1, SLK19, YMR090W, HIS3, HSP104, UBP6 and ARO8. Catalyzes ubiquitination of mislocalized tail-anchored proteins that are extracted from the mitochondrion membrane by MSP1: following extraction, mistargeted proteins are transferred to the endoplasmic reticulum, where they are ubiquitinated by DOA10 and degraded by the proteasome. This is ERAD-associated E3 ubiquitin-protein ligase DOA10 (SSM4) from Saccharomyces cerevisiae (strain ATCC 204508 / S288c) (Baker's yeast).